The chain runs to 357 residues: UPF0283 membrane protein HS_0596 (357 aa).

Helical transmembrane passes span 67–87 (LMAT…QWLV), 96–116 (IAFV…GAII), and 213–233 (AVES…MFFI).

This sequence belongs to the UPF0283 family.

It is found in the cell inner membrane. The chain is UPF0283 membrane protein HS_0596 from Histophilus somni (strain 129Pt) (Haemophilus somnus).